The following is a 1028-amino-acid chain: MPPRRDLKKILIIGSGPITIGQAAEFDYSGTQAVKALRGAGYRVVLVNSNPATIMTDPELAERTYIEPLDLEHLEGILAREAPDALLPTLGGQTGLNLAMALYEEGILQKYGVELIGAKAEAIRKGEDREAFQEAMRRIDLEVPRGQLVGSVEEGLHFAREVGFPVVVRPSFTLGGTGGGIAHDEAELVEVLSRGLTLSPVHTALVEESVLGWKEFELEVMRDHADTVVIITSIENVDPMGVHTGDSITVAPAQTLSDVEYQRMRDAAKAIIREIGVETGGSNIQFAVDPKTGRQVVIEMNPRVSRSSALASKATGFPIAKIAALLAVGYRLDELPNDITRKTPASFEPTIDYVVVKIPRFAFEKFRPLRNTLGELKDELTTQMKSVGEVMAIGRTFKEALMKALRGLERDVRALAGVRTEELEKKLYPNPDRVYAVMELLRRGMPVEELYQATRIDPWFLHQMKEIVEAEEWLKTHPPKDREDWRFYKGLGLTDRRIGELLGKGEKEVRAERKALGVVPVYKTVDTCAAEFEAYTPYHYSTYELEDEVWPSQKPKVVILGSGPIRIGQGVEFDYATVHAVWALKEAGFETIMVNSNPETVSTDYDTADRLYFEPLTLEDVLNIVEHEKPIGVIATLGGQTPLKLAKGLEEAGVRLLGTPFSAIHQAEDREAFHALCQRLGIPQPEGRVAQSPEEALRLAPEVGFPLLVRPSYVLGGRAMQVVRDEGELKRYLEEVYAPLEERPSILLDRFLEGAIELDVDALSDGQEVMVAGIMEHVERAGVHSGDSATLLPPVHVPEEALKKVRDYTRRLALTLGVRGLLNVQYAVVGEEVYVLEANPRASRTVPFVSKAIGVPLAKLAALIAVGKTLKELGVRDLDPVPPYYAAKEVVIPWIKFPGVIPELGPEMRSTGESMGIDQDPYLAYYKAELGAGQRLPLSGQVRFIGEGLEDLKALYQEAGFALTEGQDYDLLISLVPDPELRRAVERGLPFITTREGAWWSLKAILRARESGLRVQSLQDWHQKAPRG.

Residues 1-409 (MPPRRDLKKI…ALMKALRGLE (409 aa)) form a carboxyphosphate synthetic domain region. ATP contacts are provided by Arg129, Arg169, Gly175, Gly176, Glu208, Val210, Glu215, Gly241, Val242, His243, Gln285, and Glu299. Positions 133-328 (QEAMRRIDLE…IAKIAALLAV (196 aa)) constitute an ATP-grasp 1 domain. Mg(2+) is bound by residues Gln285, Glu299, and Asn301. Gln285, Glu299, and Asn301 together coordinate Mn(2+). The oligomerization domain stretch occupies residues 410 to 549 (RDVRALAGVR…YSTYELEDEV (140 aa)). The segment at 550–933 (WPSQKPKVVI…AYYKAELGAG (384 aa)) is carbamoyl phosphate synthetic domain. An ATP-grasp 2 domain is found at 674–866 (HALCQRLGIP…LAKLAALIAV (193 aa)). ATP-binding residues include Arg710, Arg750, Leu752, Glu757, Gly782, Val783, His784, Ser785, Gln825, and Glu837. Mg(2+)-binding residues include Gln825, Glu837, and Asn839. Gln825, Glu837, and Asn839 together coordinate Mn(2+). Residues 934-1028 (QRLPLSGQVR…QDWHQKAPRG (95 aa)) form the MGS-like domain. An allosteric domain region spans residues 934–1028 (QRLPLSGQVR…QDWHQKAPRG (95 aa)).

Belongs to the CarB family. In terms of assembly, composed of two chains; the small (or glutamine) chain promotes the hydrolysis of glutamine to ammonia, which is used by the large (or ammonia) chain to synthesize carbamoyl phosphate. Tetramer of heterodimers (alpha,beta)4. It depends on Mg(2+) as a cofactor. Requires Mn(2+) as cofactor.

It catalyses the reaction hydrogencarbonate + L-glutamine + 2 ATP + H2O = carbamoyl phosphate + L-glutamate + 2 ADP + phosphate + 2 H(+). The catalysed reaction is hydrogencarbonate + NH4(+) + 2 ATP = carbamoyl phosphate + 2 ADP + phosphate + 2 H(+). It functions in the pathway amino-acid biosynthesis; L-arginine biosynthesis; carbamoyl phosphate from bicarbonate: step 1/1. The protein operates within pyrimidine metabolism; UMP biosynthesis via de novo pathway; (S)-dihydroorotate from bicarbonate: step 1/3. In terms of biological role, large subunit of the glutamine-dependent carbamoyl phosphate synthetase (CPSase). CPSase catalyzes the formation of carbamoyl phosphate from the ammonia moiety of glutamine, carbonate, and phosphate donated by ATP, constituting the first step of 2 biosynthetic pathways, one leading to arginine and/or urea and the other to pyrimidine nucleotides. The large subunit (synthetase) binds the substrates ammonia (free or transferred from glutamine from the small subunit), hydrogencarbonate and ATP and carries out an ATP-coupled ligase reaction, activating hydrogencarbonate by forming carboxy phosphate which reacts with ammonia to form carbamoyl phosphate. In Thermus thermophilus (strain ATCC BAA-163 / DSM 7039 / HB27), this protein is Carbamoyl phosphate synthase large chain.